Reading from the N-terminus, the 429-residue chain is Enolase (429 aa).

Glutamine 162 contributes to the (2R)-2-phosphoglycerate binding site. The active-site Proton donor is glutamate 204. The Mg(2+) site is built by aspartate 241, glutamate 283, and aspartate 310. (2R)-2-phosphoglycerate contacts are provided by lysine 335, arginine 364, serine 365, and lysine 386. Lysine 335 functions as the Proton acceptor in the catalytic mechanism.

This sequence belongs to the enolase family. It depends on Mg(2+) as a cofactor.

It localises to the cytoplasm. It is found in the secreted. Its subcellular location is the cell surface. It carries out the reaction (2R)-2-phosphoglycerate = phosphoenolpyruvate + H2O. Its pathway is carbohydrate degradation; glycolysis; pyruvate from D-glyceraldehyde 3-phosphate: step 4/5. Functionally, catalyzes the reversible conversion of 2-phosphoglycerate (2-PG) into phosphoenolpyruvate (PEP). It is essential for the degradation of carbohydrates via glycolysis. The chain is Enolase from Mycobacterium leprae (strain TN).